Reading from the N-terminus, the 453-residue chain is Lipase 9 (453 aa).

An N-terminal signal peptide occupies residues 1 to 14; the sequence is MLYLILFLIAPIYA. The N-linked (GlcNAc...) asparagine glycan is linked to asparagine 36. Cysteine 110 and cysteine 281 are disulfide-bonded. Serine 194 acts as the Charge relay system in catalysis. N-linked (GlcNAc...) asparagine glycans are attached at residues asparagine 229, asparagine 266, and asparagine 269. Catalysis depends on charge relay system residues aspartate 343 and histidine 376. A disulfide bridge links cysteine 359 with cysteine 404. Asparagine 417 is a glycosylation site (N-linked (GlcNAc...) asparagine).

It belongs to the AB hydrolase superfamily. Lipase family. Class Lip subfamily.

The protein resides in the secreted. The enzyme catalyses a triacylglycerol + H2O = a diacylglycerol + a fatty acid + H(+). Functionally, secreted lipase that is able to hydrolyze both the neutral triacylglycerols and the monopalmitate ester Tween 40, allowing the use of hydrolyzed products as carbon sources. Has broad lipolytic activity, which may be important for colonization and subsequent infection, therefore contributing to the persistence and virulence in human tissue. This Candida albicans (strain SC5314 / ATCC MYA-2876) (Yeast) protein is Lipase 9.